A 156-amino-acid chain; its full sequence is Regulatory protein RecX (156 aa).

Belongs to the RecX family.

It localises to the cytoplasm. In terms of biological role, modulates RecA activity. This Pseudomonas putida (strain ATCC 700007 / DSM 6899 / JCM 31910 / BCRC 17059 / LMG 24140 / F1) protein is Regulatory protein RecX.